The following is a 217-amino-acid chain: GTP cyclohydrolase 1 (217 aa).

Residues cysteine 109, histidine 112, and cysteine 180 each coordinate Zn(2+).

This sequence belongs to the GTP cyclohydrolase I family. As to quaternary structure, toroid-shaped homodecamer, composed of two pentamers of five dimers.

It catalyses the reaction GTP + H2O = 7,8-dihydroneopterin 3'-triphosphate + formate + H(+). It participates in cofactor biosynthesis; 7,8-dihydroneopterin triphosphate biosynthesis; 7,8-dihydroneopterin triphosphate from GTP: step 1/1. This Photobacterium profundum (strain SS9) protein is GTP cyclohydrolase 1.